The primary structure comprises 135 residues: ATP synthase epsilon chain 1 (135 aa).

It belongs to the ATPase epsilon chain family. As to quaternary structure, F-type ATPases have 2 components, CF(1) - the catalytic core - and CF(0) - the membrane proton channel. CF(1) has five subunits: alpha(3), beta(3), gamma(1), delta(1), epsilon(1). CF(0) has three main subunits: a, b and c.

It is found in the cell inner membrane. Produces ATP from ADP in the presence of a proton gradient across the membrane. This Nitrobacter hamburgensis (strain DSM 10229 / NCIMB 13809 / X14) protein is ATP synthase epsilon chain 1.